The chain runs to 639 residues: MDGRVGLRASRRAAPTPRVAVRSSPRHRARVREQEPVVSAMSGSGLGKENKAGSSTPLRHRPNAFSELDNATPRVMLRKIIQNQPQVSPLALQTVQLEETEDARPEPPSQRTSSTVELQLPDLVPEDASVTTFRMTRKRKKLSISEFERAADKRLPQNQAHSTLDSTLVRSLRMSVGSVMAPDTVEKRGLLRRPQNHKAIDIAAFEGGVEQNMLQIKAQDYLVDLQTSSMTGTTTIRTDAEVVLNNTELFVEPQLGEQNLLAVEPQLSDSKTSAQRSNTSYPAHEKARLEGLVSRVSTDERRTLRFSEKDLITDHEHVDGITQKTPAKQGEEEQDHSQQNDPMEQFSESEEMAGTTEHHADAEYSEHSEKKLSRKAVSQLTAAQDAGVEMEMTPSEGGVAEGTEHQDSPKAELQMAGSPGGHSPASYSLEKPGAKPLKEAVEQTGEIERGTITGVLDAAEEEATDDESDKEDHESEEISMKTPMFVHAAAYRPQPVLSPPHPVKSASPELPPQPVRAKPVPKSSGAAQRKTREPEIASSLIKQIFSHYVKTPVTRDAYKIVEKCSERYFKQISSDLEAYSQHAGRKTVEMADVELLMRRQGLVTDKMPLHVLVERHLPLEYRKLLIPIAVSGNKVIPCK.

5 disordered regions span residues 1–64 (MDGR…RPNA), 266–294 (QLSDSKTSAQRSNTSYPAHEKARLEGLVS), 307–451 (SEKD…ERGT), 458–477 (AAEEEATDDESDKEDHESEE), and 494–534 (QPVL…TREP). Residues 12–23 (RAAPTPRVAVRS) are compositionally biased toward low complexity. The segment at 80–500 (IIQNQPQVSP…YRPQPVLSPP (421 aa)) is flexible stalk domain. Positions 267-281 (LSDSKTSAQRSNTSY) are enriched in polar residues. Composition is skewed to basic and acidic residues over residues 307-319 (SEKDLITDHEHVD), 329-338 (QGEEEQDHSQ), 356-371 (TEHHADAEYSEHSEKK), and 432-449 (PGAKPLKEAVEQTGEIER). The segment covering 458–469 (AAEEEATDDESD) has biased composition (acidic residues).

Belongs to the CENP-T/CNN1 family. Component of the CENPA-CAD complex, composed of CENPI, CENPK, CENPL, CENPO, CENPP, CENPQ, CENPR and CENPS. The CENPA-CAD complex is probably recruited on centromeres by the CENPA-NAC complex, at least composed of CENPA, CENPC, CENPH, CENPM, CENPN, CENPT and CENPU. Identified in a centromeric complex containing histones H2A, H2B, H3 and H4, and at least CENPA, CENPB, CENPC, CENPT, CENPN, HJURP, SUPT16H, SSRP1 and RSF1. Interacts (via N-terminus) with the NDC80 complex. Heterodimer with CENPW; this dimer coassembles with CENPS-CENPX heterodimers at centromeres to form the tetrameric CENP-T-W-S-X complex.

Its subcellular location is the nucleus. It is found in the chromosome. The protein resides in the centromere. It localises to the kinetochore. Component of the CENPA-NAC (nucleosome-associated) complex, a complex that plays a central role in assembly of kinetochore proteins, mitotic progression and chromosome segregation. The CENPA-NAC complex recruits the CENPA-CAD (nucleosome distal) complex and may be involved in incorporation of newly synthesized CENPA into centromeres. Part of a nucleosome-associated complex that binds specifically to histone H3-containing nucleosomes at the centromere, as opposed to nucleosomes containing CENPA. Component of the heterotetrameric CENP-T-W-S-X complex that binds and supercoils DNA, and plays an important role in kinetochore assembly. CENPT has a fundamental role in kinetochore assembly and function. It is one of the inner kinetochore proteins, with most further proteins binding downstream. Required for normal chromosome organization and normal progress through mitosis. In Gallus gallus (Chicken), this protein is Centromere protein T (CENPT).